The chain runs to 356 residues: Phosphoserine aminotransferase (356 aa).

Residue arginine 41 participates in L-glutamate binding. Residues 76–77, tryptophan 102, threonine 150, aspartate 169, and glutamine 192 contribute to the pyridoxal 5'-phosphate site; that span reads AS. N6-(pyridoxal phosphate)lysine is present on lysine 193. 234–235 is a binding site for pyridoxal 5'-phosphate; the sequence is NT.

It belongs to the class-V pyridoxal-phosphate-dependent aminotransferase family. SerC subfamily. Homodimer. Pyridoxal 5'-phosphate is required as a cofactor.

It is found in the cytoplasm. It carries out the reaction O-phospho-L-serine + 2-oxoglutarate = 3-phosphooxypyruvate + L-glutamate. The enzyme catalyses 4-(phosphooxy)-L-threonine + 2-oxoglutarate = (R)-3-hydroxy-2-oxo-4-phosphooxybutanoate + L-glutamate. Its pathway is amino-acid biosynthesis; L-serine biosynthesis; L-serine from 3-phospho-D-glycerate: step 2/3. The protein operates within cofactor biosynthesis; pyridoxine 5'-phosphate biosynthesis; pyridoxine 5'-phosphate from D-erythrose 4-phosphate: step 3/5. Catalyzes the reversible conversion of 3-phosphohydroxypyruvate to phosphoserine and of 3-hydroxy-2-oxo-4-phosphonooxybutanoate to phosphohydroxythreonine. The chain is Phosphoserine aminotransferase from Flavobacterium psychrophilum (strain ATCC 49511 / DSM 21280 / CIP 103535 / JIP02/86).